The primary structure comprises 410 residues: Protein TIC 214 (410 aa).

The next 6 membrane-spanning stretches (helical) occupy residues 22 to 42 (FVFG…GSFI), 61 to 81 (GSAI…IGVI), 87 to 107 (LEPS…IGFL), 131 to 151 (AVIV…ITSI), 161 to 181 (LFLF…GFLI), and 210 to 230 (LALC…YIGL).

The protein belongs to the TIC214 family. As to quaternary structure, part of the Tic complex.

The protein resides in the plastid. It is found in the chloroplast inner membrane. Involved in protein precursor import into chloroplasts. May be part of an intermediate translocation complex acting as a protein-conducting channel at the inner envelope. In Mesostigma viride (Green alga), this protein is Protein TIC 214.